The primary structure comprises 345 residues: S-adenosylmethionine:tRNA ribosyltransferase-isomerase (345 aa).

Belongs to the QueA family. As to quaternary structure, monomer.

The protein resides in the cytoplasm. The enzyme catalyses 7-aminomethyl-7-carbaguanosine(34) in tRNA + S-adenosyl-L-methionine = epoxyqueuosine(34) in tRNA + adenine + L-methionine + 2 H(+). Its pathway is tRNA modification; tRNA-queuosine biosynthesis. In terms of biological role, transfers and isomerizes the ribose moiety from AdoMet to the 7-aminomethyl group of 7-deazaguanine (preQ1-tRNA) to give epoxyqueuosine (oQ-tRNA). The polypeptide is S-adenosylmethionine:tRNA ribosyltransferase-isomerase (Anaeromyxobacter sp. (strain K)).